The chain runs to 728 residues: 1,4-alpha-glucan branching enzyme GlgB (728 aa).

Residue D405 is the Nucleophile of the active site. Catalysis depends on E458, which acts as the Proton donor.

This sequence belongs to the glycosyl hydrolase 13 family. GlgB subfamily. Monomer.

The enzyme catalyses Transfers a segment of a (1-&gt;4)-alpha-D-glucan chain to a primary hydroxy group in a similar glucan chain.. It functions in the pathway glycan biosynthesis; glycogen biosynthesis. Catalyzes the formation of the alpha-1,6-glucosidic linkages in glycogen by scission of a 1,4-alpha-linked oligosaccharide from growing alpha-1,4-glucan chains and the subsequent attachment of the oligosaccharide to the alpha-1,6 position. The protein is 1,4-alpha-glucan branching enzyme GlgB of Klebsiella pneumoniae subsp. pneumoniae (strain ATCC 700721 / MGH 78578).